The following is a 486-amino-acid chain: Hematopoietic lineage cell-specific protein (486 aa).

The involved in HAX-1 binding stretch occupies residues 27–66 (FVNDISEKEQRWGAKTIEGSGRTEHINIHQLRNKVSEEHD). The residue at position 41 (K41) is an N6-acetyllysine. Cortactin repeat units lie at residues 79–115 (ASHGYGGRFGVERDRMDKSAVGHEYVAEVEKHSSQTD), 116–152 (AAKGFGGKYGVERDRADKSAVGFDYKGEVEKHTSQKD), and 153–189 (YSRGFGGRYGVEKDKWDKAALGYDYKGETEKHESQRD). An N6-acetyllysine modification is found at K123. Y140 bears the Phosphotyrosine mark. The Cortactin 4; truncated repeat unit spans residues 190–212 (YAKGFGGQYGIQKDRVDKSAVGF). Position 192 is an N6-acetyllysine (K192). Phosphotyrosine is present on Y198. The residue at position 222 (Y222) is a Phosphotyrosine; by FGR. Residue K241 is modified to N6-acetyllysine. The span at 243-276 (ESMAEEKRKREEEEKAQQVARRQQERKAVTKRSP) shows a compositional bias: basic and acidic residues. Residues 243–419 (ESMAEEKRKR…SALAGSSGCP (177 aa)) form a disordered region. S275 carries the phosphoserine modification. T308 carries the post-translational modification Phosphothreonine. Positions 315-324 (EPVRTSREHP) are enriched in basic and acidic residues. 2 stretches are compositionally biased toward acidic residues: residues 353-383 (QVEEEPVYEAEPEPEPEPEPEPENDYEDVEE) and 390-405 (EDEPEGDYEEVLEPED). Y378 and Y397 each carry phosphotyrosine; by SYK and FES. Over residues 406–419 (SSFSSALAGSSGCP) the composition is skewed to low complexity. The 59-residue stretch at 428 to 486 (ALGISAVAVYDYQGEGSDELSFDPDDVITDIEMVDEGWWRGRCHGHFGLFPANYVKLLE) folds into the SH3 domain.

As to quaternary structure, associates with the SH2 and SH3 domains of LCK. Binding to he LCK SH3 domain occurs constitutively, while binding to the LCK SH2 domain occurs only upon TCR stimulation. A similar binding pattern was observed with LYN, but not with FYN in which the FYN SH2 region associates upon TCR stimulation but the FYN SH3 region does not associate regardless of TCR stimulation. Directly associates with HAX1, through binding to its C-terminal region. Interacts with HS1BP3. Interacts with FES/FPS. Interacts (via SH2 domain) with FGR. Forms a multiprotein complex with LYN and ANKRD54. Phosphorylated by FES. Phosphorylated by LYN, FYN and FGR after cross-linking of surface IgM on B-cells. Phosphorylation by LYN, FYN and FGR requires prior phosphorylation by SYK or FES. Expressed only in tissues and cells of hematopoietic origin.

It is found in the membrane. The protein localises to the cytoplasm. It localises to the mitochondrion. Its function is as follows. Substrate of the antigen receptor-coupled tyrosine kinase. Plays a role in antigen receptor signaling for both clonal expansion and deletion in lymphoid cells. May also be involved in the regulation of gene expression. The protein is Hematopoietic lineage cell-specific protein (HCLS1) of Homo sapiens (Human).